We begin with the raw amino-acid sequence, 158 residues long: Non-secretory ribonuclease (158 aa).

The first 27 residues, 1–27 (MVPKLFTSQICLLPLLGLLSAEGSPHA), serve as a signal peptide directing secretion. The active-site Proton acceptor is the His42. Tyr60 carries the post-translational modification 3'-nitrotyrosine. 65–69 (KNKNT) contacts substrate. Residues Asn86, Asn92, and Asn111 are each glycosylated (N-linked (GlcNAc...) asparagine). The active-site Proton donor is the His153.

Belongs to the pancreatic ribonuclease family. Interacts with and forms a tight 1:1 complex with RNH1. Dimerization of two such complexes may occur.

The protein localises to the lysosome. Its subcellular location is the cytoplasmic granule. It carries out the reaction an [RNA] containing cytidine + H2O = an [RNA]-3'-cytidine-3'-phosphate + a 5'-hydroxy-ribonucleotide-3'-[RNA].. The catalysed reaction is an [RNA] containing uridine + H2O = an [RNA]-3'-uridine-3'-phosphate + a 5'-hydroxy-ribonucleotide-3'-[RNA].. In terms of biological role, this is a non-secretory ribonuclease. It is a pyrimidine specific nuclease with a slight preference for U. Cytotoxin and helminthotoxin. Possesses a wide variety of biological activities. In Callithrix jacchus (White-tufted-ear marmoset), this protein is Non-secretory ribonuclease (RNASE2).